Reading from the N-terminus, the 398-residue chain is Queuine tRNA-ribosyltransferase (398 aa).

Asp102 (proton acceptor) is an active-site residue. Substrate is bound by residues 102 to 106, Asp156, Gln205, and Gly232; that span reads DSGGF. Positions 263 to 269 are RNA binding; sequence GVGTPED. The Nucleophile role is filled by Asp282. Residues 287–291 form an RNA binding; important for wobble base 34 recognition region; the sequence is TRNAR. Cys320, Cys322, Cys325, and His362 together coordinate Zn(2+).

The protein belongs to the queuine tRNA-ribosyltransferase family. In terms of assembly, homodimer. Within each dimer, one monomer is responsible for RNA recognition and catalysis, while the other monomer binds to the replacement base PreQ1. It depends on Zn(2+) as a cofactor.

It catalyses the reaction 7-aminomethyl-7-carbaguanine + guanosine(34) in tRNA = 7-aminomethyl-7-carbaguanosine(34) in tRNA + guanine. It participates in tRNA modification; tRNA-queuosine biosynthesis. Functionally, catalyzes the base-exchange of a guanine (G) residue with the queuine precursor 7-aminomethyl-7-deazaguanine (PreQ1) at position 34 (anticodon wobble position) in tRNAs with GU(N) anticodons (tRNA-Asp, -Asn, -His and -Tyr). Catalysis occurs through a double-displacement mechanism. The nucleophile active site attacks the C1' of nucleotide 34 to detach the guanine base from the RNA, forming a covalent enzyme-RNA intermediate. The proton acceptor active site deprotonates the incoming PreQ1, allowing a nucleophilic attack on the C1' of the ribose to form the product. After dissociation, two additional enzymatic reactions on the tRNA convert PreQ1 to queuine (Q), resulting in the hypermodified nucleoside queuosine (7-(((4,5-cis-dihydroxy-2-cyclopenten-1-yl)amino)methyl)-7-deazaguanosine). The polypeptide is Queuine tRNA-ribosyltransferase (Polaromonas sp. (strain JS666 / ATCC BAA-500)).